The primary structure comprises 396 residues: NADH-quinone oxidoreductase subunit D (396 aa).

This sequence belongs to the complex I 49 kDa subunit family. As to quaternary structure, NDH-1 is composed of 14 different subunits. Subunits NuoB, C, D, E, F, and G constitute the peripheral sector of the complex.

It is found in the cell inner membrane. The enzyme catalyses a quinone + NADH + 5 H(+)(in) = a quinol + NAD(+) + 4 H(+)(out). Functionally, NDH-1 shuttles electrons from NADH, via FMN and iron-sulfur (Fe-S) centers, to quinones in the respiratory chain. The immediate electron acceptor for the enzyme in this species is believed to be ubiquinone. Couples the redox reaction to proton translocation (for every two electrons transferred, four hydrogen ions are translocated across the cytoplasmic membrane), and thus conserves the redox energy in a proton gradient. This Rhodopseudomonas palustris (strain BisA53) protein is NADH-quinone oxidoreductase subunit D.